Here is a 145-residue protein sequence, read N- to C-terminus: Protein cornichon homolog 1 (145 aa).

3 helical membrane passes run 5–25 (FAAF…FFAI), 57–77 (IIHG…SILA), and 116–136 (LRIS…YLYA).

The protein belongs to the cornichon family. In terms of assembly, interacts with glr-1. In terms of tissue distribution, widely expressed in the nervous system including in the AVA interneurons.

It localises to the endoplasmic reticulum membrane. The protein resides in the synapse. The protein localises to the cell projection. It is found in the dendrite. Its function is as follows. Negatively regulates export of glr-1 from the endoplasmic reticulum to synapses. This Caenorhabditis elegans protein is Protein cornichon homolog 1.